Here is a 663-residue protein sequence, read N- to C-terminus: UvrABC system protein B (663 aa).

Over residues 1 to 10 (MIDKRDDKPF) the composition is skewed to basic and acidic residues. A disordered region spans residues 1 to 23 (MIDKRDDKPFKLKSKYKPSGDQP). The Helicase ATP-binding domain maps to 31 to 418 (DNIEGGEKAQ…TNTIIEQIIR (388 aa)). 44–51 (GATGTGKT) contributes to the ATP binding site. The Beta-hairpin motif lies at 97 to 120 (YYDYYQPEAYVPSSDTYIEKDSSV). One can recognise a Helicase C-terminal domain in the interval 435 to 601 (QMDDLLGEIN…TIKKDIRGLI (167 aa)). The 36-residue stretch at 627 to 662 (KEAINALQKQMQEAAELLDFELAAQMRDLILELKLM) folds into the UVR domain.

This sequence belongs to the UvrB family. As to quaternary structure, forms a heterotetramer with UvrA during the search for lesions. Interacts with UvrC in an incision complex.

It is found in the cytoplasm. Functionally, the UvrABC repair system catalyzes the recognition and processing of DNA lesions. A damage recognition complex composed of 2 UvrA and 2 UvrB subunits scans DNA for abnormalities. Upon binding of the UvrA(2)B(2) complex to a putative damaged site, the DNA wraps around one UvrB monomer. DNA wrap is dependent on ATP binding by UvrB and probably causes local melting of the DNA helix, facilitating insertion of UvrB beta-hairpin between the DNA strands. Then UvrB probes one DNA strand for the presence of a lesion. If a lesion is found the UvrA subunits dissociate and the UvrB-DNA preincision complex is formed. This complex is subsequently bound by UvrC and the second UvrB is released. If no lesion is found, the DNA wraps around the other UvrB subunit that will check the other stand for damage. The chain is UvrABC system protein B from Streptococcus pyogenes serotype M3 (strain ATCC BAA-595 / MGAS315).